Consider the following 157-residue polypeptide: S-ribosylhomocysteine lyase (157 aa).

Fe cation contacts are provided by His-54, His-58, and Cys-124.

The protein belongs to the LuxS family. As to quaternary structure, homodimer. Fe cation is required as a cofactor.

The catalysed reaction is S-(5-deoxy-D-ribos-5-yl)-L-homocysteine = (S)-4,5-dihydroxypentane-2,3-dione + L-homocysteine. Involved in the synthesis of autoinducer 2 (AI-2) which is secreted by bacteria and is used to communicate both the cell density and the metabolic potential of the environment. The regulation of gene expression in response to changes in cell density is called quorum sensing. Catalyzes the transformation of S-ribosylhomocysteine (RHC) to homocysteine (HC) and 4,5-dihydroxy-2,3-pentadione (DPD). In Oenococcus oeni (strain ATCC BAA-331 / PSU-1), this protein is S-ribosylhomocysteine lyase.